The sequence spans 331 residues: Protoheme IX farnesyltransferase (331 aa).

8 consecutive transmembrane segments (helical) span residues 63–83 (LACT…LNCL), 109–129 (SVFI…VSGV), 132–152 (LAAG…TAFL), 160–180 (IVFG…AAAG), 188–208 (WLFS…AILL), 215–235 (VGIP…AISV), 241–261 (VFLS…YGIL), and 294–314 (ILYM…VSIV).

Belongs to the UbiA prenyltransferase family. Protoheme IX farnesyltransferase subfamily.

It is found in the cell inner membrane. It catalyses the reaction heme b + (2E,6E)-farnesyl diphosphate + H2O = Fe(II)-heme o + diphosphate. Its pathway is porphyrin-containing compound metabolism; heme O biosynthesis; heme O from protoheme: step 1/1. In terms of biological role, converts heme B (protoheme IX) to heme O by substitution of the vinyl group on carbon 2 of heme B porphyrin ring with a hydroxyethyl farnesyl side group. This Prochlorococcus marinus (strain NATL1A) protein is Protoheme IX farnesyltransferase.